We begin with the raw amino-acid sequence, 300 residues long: Bifunctional protein FolD (300 aa).

NADP(+)-binding positions include 169 to 171 (GHS) and I235.

This sequence belongs to the tetrahydrofolate dehydrogenase/cyclohydrolase family. Homodimer.

The enzyme catalyses (6R)-5,10-methylene-5,6,7,8-tetrahydrofolate + NADP(+) = (6R)-5,10-methenyltetrahydrofolate + NADPH. It carries out the reaction (6R)-5,10-methenyltetrahydrofolate + H2O = (6R)-10-formyltetrahydrofolate + H(+). It participates in one-carbon metabolism; tetrahydrofolate interconversion. Catalyzes the oxidation of 5,10-methylenetetrahydrofolate to 5,10-methenyltetrahydrofolate and then the hydrolysis of 5,10-methenyltetrahydrofolate to 10-formyltetrahydrofolate. This chain is Bifunctional protein FolD, found in Rhodobacter capsulatus (strain ATCC BAA-309 / NBRC 16581 / SB1003).